A 75-amino-acid polypeptide reads, in one-letter code: MFTLKKSLLLLFFLGTISLSLCEEERDADEDEGEMTEEEVKRSVLGTVKDLLIGAGKSAAQSVLTTLSCKLSNSC.

The N-terminal stretch at Met1–Cys22 is a signal peptide. Positions Glu23–Val40 are cleaved as a propeptide — removed in mature form. A disulfide bridge connects residues Cys69 and Cys75.

Expressed by the skin glands.

The protein resides in the secreted. Functionally, has antimicrobial activity against Gram-negative bacterium E.coli ATCC 8739 (MIC=50 ug) and against Gram positive bacteria S.aureus ATCC 6538 (MIC=25 ug). Has no activity against methicillin-resistant S.aureus ATCC 43300, B.subtilis ATCC 6633 and against fungus C.albicans ATCC 90028. The chain is Brevinin-2ISc from Odorrana ishikawae (Ishikawa's frog).